The sequence spans 149 residues: UPF0179 protein Mbar_A0292 (149 aa).

Belongs to the UPF0179 family.

The protein is UPF0179 protein Mbar_A0292 of Methanosarcina barkeri (strain Fusaro / DSM 804).